Consider the following 120-residue polypeptide: Large ribosomal subunit protein bL19 (120 aa).

The protein belongs to the bacterial ribosomal protein bL19 family.

This protein is located at the 30S-50S ribosomal subunit interface and may play a role in the structure and function of the aminoacyl-tRNA binding site. The polypeptide is Large ribosomal subunit protein bL19 (Dichelobacter nodosus (strain VCS1703A)).